The following is a 99-amino-acid chain: Nucleoid-associated protein SSU98_0195 (99 aa).

Belongs to the YbaB/EbfC family. As to quaternary structure, homodimer.

It is found in the cytoplasm. It localises to the nucleoid. Functionally, binds to DNA and alters its conformation. May be involved in regulation of gene expression, nucleoid organization and DNA protection. This Streptococcus suis (strain 98HAH33) protein is Nucleoid-associated protein SSU98_0195.